The sequence spans 207 residues: Uracil phosphoribosyltransferase (207 aa).

Residues R77, R102, and 129–137 (DPMLATGGS) contribute to the 5-phospho-alpha-D-ribose 1-diphosphate site. Residues I192 and 197-199 (GDA) contribute to the uracil site. D198 is a binding site for 5-phospho-alpha-D-ribose 1-diphosphate.

Belongs to the UPRTase family. Mg(2+) is required as a cofactor.

The catalysed reaction is UMP + diphosphate = 5-phospho-alpha-D-ribose 1-diphosphate + uracil. It functions in the pathway pyrimidine metabolism; UMP biosynthesis via salvage pathway; UMP from uracil: step 1/1. Allosterically activated by GTP. Functionally, catalyzes the conversion of uracil and 5-phospho-alpha-D-ribose 1-diphosphate (PRPP) to UMP and diphosphate. In Mycoplasma mycoides subsp. mycoides SC (strain CCUG 32753 / NCTC 10114 / PG1), this protein is Uracil phosphoribosyltransferase.